The primary structure comprises 88 residues: U-scoloptoxin(01)-Tl1a (88 aa).

Residues 1–16 (MSVYGLLSLLIFIVLA) form the signal peptide. In terms of domain architecture, Chitin-binding type-2 spans 25 to 81 (GKDCSEKEEYLYDSSNCDIFYECDESLKPQRMMCGPGTGWNQDKLVCDFLTNIDCTR). Cysteines 58 and 71 form a disulfide.

This sequence belongs to the scoloptoxin-01 family. In terms of processing, contains 3 disulfide bonds. As to expression, expressed by the venom gland.

Its subcellular location is the secreted. The protein is U-scoloptoxin(01)-Tl1a of Thereuopoda longicornis (Long-legged centipede).